Reading from the N-terminus, the 536-residue chain is Vacuolar segregation protein pep7 (536 aa).

Positions Met-1–Asp-31 are disordered. A compositionally biased stretch (polar residues) spans Ile-12–Asp-31. A C2H2-type zinc finger spans residues Thr-39–His-62. The FYVE-type 1; degenerate zinc-finger motif lies at Pro-136–Pro-201. 12 residues coordinate Zn(2+): Cys-158, Cys-161, Cys-193, Cys-196, Cys-281, Cys-284, Cys-297, Cys-300, Cys-305, Cys-308, Cys-324, and Cys-327. The segment at Asp-275 to Phe-332 adopts an FYVE-type 2 zinc-finger fold.

Functionally, required for vacuole segregation and vacuole protein sorting. Possibly part of a complex which tethers the vacuole membrane to microtubules, either directly or via kinesin or dynein-like motor proteins. Probably functions in several interorganelle traffic pathways. The protein is Vacuolar segregation protein pep7 (pep7) of Schizosaccharomyces pombe (strain 972 / ATCC 24843) (Fission yeast).